Consider the following 110-residue polypeptide: MFNLGNLGEMMKMMKSMQENIEKAKEELRKEEIVVEVGGGMVKVILNGLGEIKDVLIDKTLLTEDNHEILQDLLVAAFNEANRRTKEVMGEKMTQAAGLPSNIPGLGNLF.

Belongs to the YbaB/EbfC family. Homodimer.

It localises to the cytoplasm. It is found in the nucleoid. Binds to DNA and alters its conformation. May be involved in regulation of gene expression, nucleoid organization and DNA protection. The protein is Nucleoid-associated protein PERMA_0533 of Persephonella marina (strain DSM 14350 / EX-H1).